The chain runs to 260 residues: MIFHANPGVIDLGINIDHVATLRNARGTVYPDPIEAALQAEEAGADLITLHLREDRRHIRDADVRALRPQLATRMNLECAITQEMLDIACEIRPQDVCLVPERREEVTTEGGLDVAGRFGQVSSACKQLAAAGIRVSLFIDADADQIAAAAACGAPVIELHTGRYADAHTPDELAIEFRRVADGVDAGIRHGLVVNAGHGLHYTNVQPIAALAGIKELNIGHAVVAHAVFVGWQNAVREMKAIMVAARLGTRYPAAGKPA.

Asn15 contributes to the 3-amino-2-oxopropyl phosphate binding site. 17–18 (DH) contacts 1-deoxy-D-xylulose 5-phosphate. Arg26 contacts 3-amino-2-oxopropyl phosphate. His51 functions as the Proton acceptor in the catalytic mechanism. Residues Arg53 and His58 each coordinate 1-deoxy-D-xylulose 5-phosphate. Glu78 acts as the Proton acceptor in catalysis. Thr108 is a binding site for 1-deoxy-D-xylulose 5-phosphate. Catalysis depends on His199, which acts as the Proton donor. 3-amino-2-oxopropyl phosphate is bound by residues Gly200 and 221-222 (GH).

Belongs to the PNP synthase family. In terms of assembly, homooctamer; tetramer of dimers.

The protein localises to the cytoplasm. The enzyme catalyses 3-amino-2-oxopropyl phosphate + 1-deoxy-D-xylulose 5-phosphate = pyridoxine 5'-phosphate + phosphate + 2 H2O + H(+). It participates in cofactor biosynthesis; pyridoxine 5'-phosphate biosynthesis; pyridoxine 5'-phosphate from D-erythrose 4-phosphate: step 5/5. Functionally, catalyzes the complicated ring closure reaction between the two acyclic compounds 1-deoxy-D-xylulose-5-phosphate (DXP) and 3-amino-2-oxopropyl phosphate (1-amino-acetone-3-phosphate or AAP) to form pyridoxine 5'-phosphate (PNP) and inorganic phosphate. This chain is Pyridoxine 5'-phosphate synthase, found in Cupriavidus pinatubonensis (strain JMP 134 / LMG 1197) (Cupriavidus necator (strain JMP 134)).